We begin with the raw amino-acid sequence, 443 residues long: Carboxypeptidase M (443 aa).

The signal sequence occupies residues 1 to 17 (MDRARLWLGLLLPVVAA). In terms of domain architecture, Peptidase M14 spans 21-311 (RYHHQEGMEA…ASLIEYIKQV (291 aa)). N-linked (GlcNAc...) asparagine glycosylation occurs at asparagine 38. Residues histidine 83 and glutamate 86 each coordinate Zn(2+). 3 disulfides stabilise this stretch: cysteine 138/cysteine 285, cysteine 242/cysteine 284, and cysteine 341/cysteine 410. Asparagine 164 carries N-linked (GlcNAc...) asparagine glycosylation. Position 190 (histidine 190) interacts with Zn(2+). The active-site Proton donor/acceptor is glutamate 281. An N-linked (GlcNAc...) asparagine glycan is attached at asparagine 363. Serine 423 carries GPI-anchor amidated serine lipidation. A propeptide spans 424 to 443 (AATKPSLGVFFMTLLYVFFK) (removed in mature form).

Belongs to the peptidase M14 family. The cofactor is Zn(2+).

It is found in the cell membrane. The catalysed reaction is Cleavage of C-terminal arginine or lysine residues from polypeptides.. Specifically removes C-terminal basic residues (Arg or Lys) from peptides and proteins. It is believed to play important roles in the control of peptide hormone and growth factor activity at the cell surface, and in the membrane-localized degradation of extracellular proteins. The sequence is that of Carboxypeptidase M (Cpm) from Mus musculus (Mouse).